Consider the following 61-residue polypeptide: Large ribosomal subunit protein bL32 (61 aa).

Positions 1–22 are enriched in basic residues; sequence MAVPKKKTSRARRDRRRSHHAL. Positions 1-24 are disordered; sequence MAVPKKKTSRARRDRRRSHHALRG.

It belongs to the bacterial ribosomal protein bL32 family.

The sequence is that of Large ribosomal subunit protein bL32 from Rubrobacter xylanophilus (strain DSM 9941 / JCM 11954 / NBRC 16129 / PRD-1).